The primary structure comprises 493 residues: Lysine--tRNA ligase (493 aa).

Positions 26–34 (PSGHIHLGN) match the 'HIGH' region motif. A 'KMSKS' region motif is present at residues 270-274 (AMKSS).

This sequence belongs to the class-I aminoacyl-tRNA synthetase family.

The protein localises to the cytoplasm. The catalysed reaction is tRNA(Lys) + L-lysine + ATP = L-lysyl-tRNA(Lys) + AMP + diphosphate. This Archaeoglobus fulgidus (strain ATCC 49558 / DSM 4304 / JCM 9628 / NBRC 100126 / VC-16) protein is Lysine--tRNA ligase (lysS).